Consider the following 389-residue polypeptide: Lipid-A-disaccharide synthase (389 aa).

Belongs to the LpxB family.

It carries out the reaction a lipid X + a UDP-2-N,3-O-bis[(3R)-3-hydroxyacyl]-alpha-D-glucosamine = a lipid A disaccharide + UDP + H(+). It functions in the pathway bacterial outer membrane biogenesis; LPS lipid A biosynthesis. In terms of biological role, condensation of UDP-2,3-diacylglucosamine and 2,3-diacylglucosamine-1-phosphate to form lipid A disaccharide, a precursor of lipid A, a phosphorylated glycolipid that anchors the lipopolysaccharide to the outer membrane of the cell. The polypeptide is Lipid-A-disaccharide synthase (Paraburkholderia phymatum (strain DSM 17167 / CIP 108236 / LMG 21445 / STM815) (Burkholderia phymatum)).